The sequence spans 3916 residues: Fusarin C synthetase (3916 aa).

A Ketosynthase family 3 (KS3) domain is found at 9-440; the sequence is KEPIAIIGTS…GTNVHAIIEQ (432 aa). Residues Cys182, His319, and His360 each act as for beta-ketoacyl synthase activity in the active site. The tract at residues 548 to 869 is malonyl-CoA:ACP transacylase (MAT) domain; the sequence is VFTGQGAQWP…VTRNIHDVEA (322 aa). The N-terminal hotdog fold stretch occupies residues 935–1068; it reads HPLLGARSVE…GQLRVEFSSL (134 aa). A dehydratase (DH) domain region spans residues 935-1228; it reads HPLLGARSVE…GLTCTSLLRP (294 aa). Positions 935–1231 constitute a PKS/mFAS DH domain; the sequence is HPLLGARSVE…CTSLLRPGPS (297 aa). The active-site Proton acceptor; for dehydratase activity is His967. The C-terminal hotdog fold stretch occupies residues 1084-1231; sequence LTSVDMERFY…CTSLLRPGPS (148 aa). The active-site Proton donor; for dehydratase activity is Asp1141. The C-methyltransferase (CMeT) domain stretch occupies residues 1350-1584; sequence VGENLPAVVR…YMTSVMLSQA (235 aa). Residues 2092–2266 are ketoreductase (KR) domain 1; sequence TYLLIGFTGG…AASVMHIGMV (175 aa). Residues 2372–2449 enclose the Carrier 1 domain; sequence EILAVVEEEF…ELCSTVVSHL (78 aa). An O-(pantetheine 4'-phosphoryl)serine modification is found at Ser2409. Residues 2482–2511 are disordered; sequence ASPTENEPFTIRNSPNSTQVTSESGVDEET. The span at 2486-2505 shows a compositional bias: polar residues; it reads ENEPFTIRNSPNSTQVTSES. The interval 2522–2806 is condensation; the sequence is PLSFAQERLW…VNLLPLRLKL (285 aa). The segment at 2973–3385 is adenylation; it reads FEKCVVNQPD…RIAGDSQIKL (413 aa). Positions 3493 to 3570 constitute a Carrier 2 domain; the sequence is KPLTETQERL…EMAAKIDGFT (78 aa). Ser3530 is subject to O-(pantetheine 4'-phosphoryl)serine. The thiolester reductase (R) domain stretch occupies residues 3612 to 3833; that stretch reads LTGATGFLGV…DFVPVDVVAA (222 aa).

In the C-terminal section; belongs to the NRP synthetase family.

It functions in the pathway mycotoxin biosynthesis. In terms of biological role, fusarin C synthetase; part of the gene cluster that mediates the biosynthesis of the mycotoxin fusarin C. Within the cluster, FUS1, FUS2, FUS8 and FUS9 are sufficient for fusarin production. The roles of the other FUS members are yet undetermined. The fusarin C synthetase FUS1 is responsible for the condensation of one acetyl-coenzyme A (CoA) unit with six malonyl-CoA units and the amide linkage of the arising heptaketide and homoserine, subsequently releasing the first intermediate, prefusarin, as an alcohol with an open ring structure. The cytochrome P450 monooxygenase FUS8 participates in multiple oxidation processes at carbon C-20 and is able to use the FUS1 product as substrate, resulting in formation of 20-hydroxy-prefusarin. This reaction seems to be essential before the 2-pyrrolidone ring closure can be catalyzed by FUS2, generating 20-hydroxy-fusarin. FUS8 is able to further oxidizes carbon C-20 after ring closure, resulting in the formation of carboxy-fusarin C. As the last step, FUS9 methylates the hydroxyl group at C-21 to generate fusarin C. Fusarin C can then rearrange to epi-fusarin C, the (z)-isomers, and fusarin A and fusarin D. This Gibberella moniliformis (strain M3125 / FGSC 7600) (Maize ear and stalk rot fungus) protein is Fusarin C synthetase.